A 240-amino-acid chain; its full sequence is tRNA (guanine-N(1)-)-methyltransferase (240 aa).

S-adenosyl-L-methionine is bound by residues Gly108 and 127-132; that span reads LGDFIL.

This sequence belongs to the RNA methyltransferase TrmD family. Homodimer.

Its subcellular location is the cytoplasm. It carries out the reaction guanosine(37) in tRNA + S-adenosyl-L-methionine = N(1)-methylguanosine(37) in tRNA + S-adenosyl-L-homocysteine + H(+). Functionally, specifically methylates guanosine-37 in various tRNAs. The polypeptide is tRNA (guanine-N(1)-)-methyltransferase (Streptococcus mutans serotype c (strain ATCC 700610 / UA159)).